The sequence spans 142 residues: Large ribosomal subunit protein uL11 (142 aa).

It belongs to the universal ribosomal protein uL11 family. Part of the ribosomal stalk of the 50S ribosomal subunit. Interacts with L10 and the large rRNA to form the base of the stalk. L10 forms an elongated spine to which L12 dimers bind in a sequential fashion forming a multimeric L10(L12)X complex. In terms of processing, one or more lysine residues are methylated.

In terms of biological role, forms part of the ribosomal stalk which helps the ribosome interact with GTP-bound translation factors. The chain is Large ribosomal subunit protein uL11 from Alcanivorax borkumensis (strain ATCC 700651 / DSM 11573 / NCIMB 13689 / SK2).